We begin with the raw amino-acid sequence, 82 residues long: Small ribosomal subunit protein eS27B (82 aa).

Residues 37–59 (CPGCLNITTVFSHAQTAVTCESC) form a C4-type zinc finger.

Belongs to the eukaryotic ribosomal protein eS27 family. In terms of assembly, component of the small ribosomal subunit (SSU). Mature yeast ribosomes consist of a small (40S) and a large (60S) subunit. The 40S small subunit contains 1 molecule of ribosomal RNA (18S rRNA) and 33 different proteins (encoded by 57 genes). The large 60S subunit contains 3 rRNA molecules (25S, 5.8S and 5S rRNA) and 46 different proteins (encoded by 81 genes). Zn(2+) serves as cofactor. Post-translationally, the N-terminus is not modified.

The protein resides in the cytoplasm. Its function is as follows. Component of the ribosome, a large ribonucleoprotein complex responsible for the synthesis of proteins in the cell. The small ribosomal subunit (SSU) binds messenger RNAs (mRNAs) and translates the encoded message by selecting cognate aminoacyl-transfer RNA (tRNA) molecules. The large subunit (LSU) contains the ribosomal catalytic site termed the peptidyl transferase center (PTC), which catalyzes the formation of peptide bonds, thereby polymerizing the amino acids delivered by tRNAs into a polypeptide chain. The nascent polypeptides leave the ribosome through a tunnel in the LSU and interact with protein factors that function in enzymatic processing, targeting, and the membrane insertion of nascent chains at the exit of the ribosomal tunnel. This chain is Small ribosomal subunit protein eS27B, found in Saccharomyces cerevisiae (strain ATCC 204508 / S288c) (Baker's yeast).